Reading from the N-terminus, the 510-residue chain is NADH-quinone oxidoreductase subunit N (510 aa).

Transmembrane regions (helical) follow at residues Leu-14–Ala-34, Val-42–Met-62, Ala-84–Leu-104, Gly-113–Ala-133, Leu-135–Leu-155, Val-170–Leu-190, Met-208–Phe-228, Pro-247–Phe-267, Phe-286–Gly-306, Ser-323–Phe-343, Val-346–Val-366, Ala-390–Phe-410, Trp-426–Ile-446, and Ile-466–Leu-486.

The protein belongs to the complex I subunit 2 family. NDH-1 is composed of 14 different subunits. Subunits NuoA, H, J, K, L, M, N constitute the membrane sector of the complex.

The protein resides in the cell membrane. It carries out the reaction a quinone + NADH + 5 H(+)(in) = a quinol + NAD(+) + 4 H(+)(out). In terms of biological role, NDH-1 shuttles electrons from NADH, via FMN and iron-sulfur (Fe-S) centers, to quinones in the respiratory chain. The immediate electron acceptor for the enzyme in this species is believed to be a menaquinone. Couples the redox reaction to proton translocation (for every two electrons transferred, four hydrogen ions are translocated across the cytoplasmic membrane), and thus conserves the redox energy in a proton gradient. The polypeptide is NADH-quinone oxidoreductase subunit N (Brevibacillus brevis (strain 47 / JCM 6285 / NBRC 100599)).